The primary structure comprises 201 residues: Recombination protein RecR (201 aa).

The C4-type zinc-finger motif lies at 60–75 (CSCCGNVDTSDPCTIC). A Toprim domain is found at 83 to 178 (TTLIVVEDVS…RVTRLAHGVP (96 aa)).

Belongs to the RecR family.

May play a role in DNA repair. It seems to be involved in an RecBC-independent recombinational process of DNA repair. It may act with RecF and RecO. The protein is Recombination protein RecR of Brucella anthropi (strain ATCC 49188 / DSM 6882 / CCUG 24695 / JCM 21032 / LMG 3331 / NBRC 15819 / NCTC 12168 / Alc 37) (Ochrobactrum anthropi).